The chain runs to 648 residues: PTS system N-acetylglucosamine-specific EIICBA component (648 aa).

M1 carries the N-formylmethionine modification. One can recognise a PTS EIIC type-1 domain in the interval 1–371; that stretch reads MNILGFFQRL…FNLKTPGRED (371 aa). The next 12 membrane-spanning stretches (helical) occupy residues 16 to 36, 38 to 58, 70 to 90, 92 to 112, 132 to 152, 159 to 179, 192 to 212, 232 to 252, 260 to 280, 282 to 302, 303 to 323, and 339 to 359; these read LPIA…PDLL, VAFI…IFAI, GAAA…MVTI, PEIN…GAAY, FVPI…GYVW, IHAG…IFGF, VLNT…GTVF, GFFP…YFAA, VGGM…TEPL, FLFM…TGIS, LFVA…GAID, and MLLV…SLVI. A PTS EIIB type-1 domain is found at 390-472; sequence TQLATNYIAA…KKVVARGPVA (83 aa). Residue C412 is the Phosphocysteine intermediate; for EIIB activity of the active site. C412 bears the Phosphocysteine; by EIIA mark. In terms of domain architecture, PTS EIIA type-1 spans 517-621; that stretch reads DEAFASKAVG…SMISPVVCSN (105 aa). Zn(2+) contacts are provided by H554 and H569. The Tele-phosphohistidine intermediate; for EIIA activity role is filled by H569. The residue at position 569 (H569) is a Phosphohistidine; by HPr.

Zn(2+) is required as a cofactor. 60% of isolated protein was N-formylated.

The protein localises to the cell inner membrane. The catalysed reaction is N(pros)-phospho-L-histidyl-[protein] + N-acetyl-D-glucosamine(out) = N-acetyl-D-glucosamine 6-phosphate(in) + L-histidyl-[protein]. With respect to regulation, P-chloromercuribenzoate inhibits the accumulation of both N-acetyl-D-glucosamine and antibiotic streptozotocin (2-deoxy-2-(3-methyl-3-nitrosoureido)-D-glucopyranose). N-acetyl-D-glucosamine is a competitive inhibitor for the uptake of streptozotocin. In terms of biological role, the phosphoenolpyruvate-dependent sugar phosphotransferase system (sugar PTS), a major carbohydrate active transport system, catalyzes the phosphorylation of incoming sugar substrates concomitantly with their translocation across the cell membrane. This system is involved in N-acetylglucosamine transport. It can also transport and phosphorylate the antibiotic streptozotocin. Could play a significant role in the recycling of peptidoglycan. The protein is PTS system N-acetylglucosamine-specific EIICBA component of Escherichia coli (strain K12).